The chain runs to 614 residues: MEPAEKVKHFPDKPGVYLFRGARGEVLYVGKAVSLKNRVRSYFTGARSDKVQALVGKTRDVECLVTGSEIEALILESNLIKEHRPRYNVVLKDDKSYPYLKVTVQEEYPRIFLTRAQPRDGARYFGPYPSAAAVHETVRLLKKLFPLRSCRQTRFRQQRPCLNHHIGRCLGPCSGTVDPERYRAMVQEVLLFLEGRHADLVRGLARKMEAAAANLEFERAAELRDQLRAVEQVLARQSIVSPGREDRDVLALARDGNRGRVIVLEIRDGKLLGRHSLDLQGIAERSDAEVLAAFLKQYYREAGLIPPEVLLPVPLGEEQGLIAEWLGLRRQGRVRLHVPRRGRKRELVRLAEQNAAEARAQMEFERDAGEALAELAAVLGLDQAPARLEGYDISNLQGAQTVGVMVVFEDGRPAPGEYRQFRVRETAGTPNDFAAMREVVARRFARAREEGKLIATGRLSSRDARFHRLPDLVLVDGGKGQLSAALEGLRETGFEAVPVFALTKEEEKIFAPGRSDPVPVPPGSQALFLLQHLRDEAHRFAVDTHRRTRSRESLRSLLEEIDGIGPARRRALQKAFPSLDALKGATLAELAAVPSMNRKAAQAVYDYFQDTPTE.

Residues 12-89 (DKPGVYLFRG…IKEHRPRYNV (78 aa)) enclose the GIY-YIG domain. In terms of domain architecture, UVR spans 198–233 (ADLVRGLARKMEAAAANLEFERAAELRDQLRAVEQV).

This sequence belongs to the UvrC family. In terms of assembly, interacts with UvrB in an incision complex.

Its subcellular location is the cytoplasm. In terms of biological role, the UvrABC repair system catalyzes the recognition and processing of DNA lesions. UvrC both incises the 5' and 3' sides of the lesion. The N-terminal half is responsible for the 3' incision and the C-terminal half is responsible for the 5' incision. In Desulforudis audaxviator (strain MP104C), this protein is UvrABC system protein C.